A 420-amino-acid chain; its full sequence is Glutamyl-tRNA reductase (420 aa).

Substrate is bound by residues 49 to 52 (TCNR), serine 109, 114 to 116 (EPQ), and glutamine 120. The Nucleophile role is filled by cysteine 50. 189–194 (GAGETI) provides a ligand contact to NADP(+).

This sequence belongs to the glutamyl-tRNA reductase family. In terms of assembly, homodimer.

The enzyme catalyses (S)-4-amino-5-oxopentanoate + tRNA(Glu) + NADP(+) = L-glutamyl-tRNA(Glu) + NADPH + H(+). The protein operates within porphyrin-containing compound metabolism; protoporphyrin-IX biosynthesis; 5-aminolevulinate from L-glutamyl-tRNA(Glu): step 1/2. In terms of biological role, catalyzes the NADPH-dependent reduction of glutamyl-tRNA(Glu) to glutamate 1-semialdehyde (GSA). This Photorhabdus laumondii subsp. laumondii (strain DSM 15139 / CIP 105565 / TT01) (Photorhabdus luminescens subsp. laumondii) protein is Glutamyl-tRNA reductase.